Reading from the N-terminus, the 268-residue chain is Tryptophan synthase alpha chain (268 aa).

Active-site proton acceptor residues include glutamate 49 and aspartate 60.

This sequence belongs to the TrpA family. Tetramer of two alpha and two beta chains.

The enzyme catalyses (1S,2R)-1-C-(indol-3-yl)glycerol 3-phosphate + L-serine = D-glyceraldehyde 3-phosphate + L-tryptophan + H2O. Its pathway is amino-acid biosynthesis; L-tryptophan biosynthesis; L-tryptophan from chorismate: step 5/5. Functionally, the alpha subunit is responsible for the aldol cleavage of indoleglycerol phosphate to indole and glyceraldehyde 3-phosphate. This Escherichia coli O1:K1 / APEC protein is Tryptophan synthase alpha chain.